The primary structure comprises 95 residues: Aspartyl/glutamyl-tRNA(Asn/Gln) amidotransferase subunit C (95 aa).

This sequence belongs to the GatC family. In terms of assembly, heterotrimer of A, B and C subunits.

The catalysed reaction is L-glutamyl-tRNA(Gln) + L-glutamine + ATP + H2O = L-glutaminyl-tRNA(Gln) + L-glutamate + ADP + phosphate + H(+). It catalyses the reaction L-aspartyl-tRNA(Asn) + L-glutamine + ATP + H2O = L-asparaginyl-tRNA(Asn) + L-glutamate + ADP + phosphate + 2 H(+). Functionally, allows the formation of correctly charged Asn-tRNA(Asn) or Gln-tRNA(Gln) through the transamidation of misacylated Asp-tRNA(Asn) or Glu-tRNA(Gln) in organisms which lack either or both of asparaginyl-tRNA or glutaminyl-tRNA synthetases. The reaction takes place in the presence of glutamine and ATP through an activated phospho-Asp-tRNA(Asn) or phospho-Glu-tRNA(Gln). The sequence is that of Aspartyl/glutamyl-tRNA(Asn/Gln) amidotransferase subunit C from Lysinibacillus sphaericus (strain C3-41).